Here is a 191-residue protein sequence, read N- to C-terminus: Large ribosomal subunit protein bL9 (191 aa).

Positions 150–191 (EAERQAKGESLTSADAIYGVDEDALRPEDFFDPDADRDGDDE) are disordered. The span at 179-191 (FFDPDADRDGDDE) shows a compositional bias: acidic residues.

It belongs to the bacterial ribosomal protein bL9 family.

Its function is as follows. Binds to the 23S rRNA. In Allorhizobium ampelinum (strain ATCC BAA-846 / DSM 112012 / S4) (Agrobacterium vitis (strain S4)), this protein is Large ribosomal subunit protein bL9.